A 556-amino-acid chain; its full sequence is MSSLPSRLAARIESAIGVDPQLRPATKPQFGHFQSNVALRLAKEEKRPPRDVAADIVAKLDIEDLCETPEIAGPGFINLRLRADVLARVASDFVTDPNAGIAQAEKPERVVIDYSAPNVAKQMHVGHLRSTIIGDCFNRVLSAQGHTVIPQNHIGDWGTQFGMLIEYIVEKRMDVEDFDLSGVEQLYQDSKKTFDADPQFADRARRRVVKLQGGDAETLRIWRTLIDISLEGFNATYSRLSVLLTDEDVAGESSYNDDLPRVVDELVADGLAVEDNGALCVFVEGQDAPMIVRKRDGGFGYDATDLAAIRRRVGKLKADRIIYVTDVRQSHHFEVLFQVARMAGFLPDDVEAEHVGYGMVLGPDGRPFKTREGGTVSLSDLLDEAETHAAPNIALAAIKYADLSNGLQKDYVFDAERMVQTTGDTGPYLQYAHARVSQILRKAAAEANPNVDPEADLDAMDWGRISVLDEPAEQQLALLLSRFGEIVEVVATDLTPHKLCTYLYELAGAYSVFYEQCPVLRSTGEVRGSRLALCAATRRVLGRGLDLLGIDAPDRM.

The 'HIGH' region motif lies at Pro117 to His127.

This sequence belongs to the class-I aminoacyl-tRNA synthetase family. In terms of assembly, monomer.

It localises to the cytoplasm. The enzyme catalyses tRNA(Arg) + L-arginine + ATP = L-arginyl-tRNA(Arg) + AMP + diphosphate. The sequence is that of Arginine--tRNA ligase from Cutibacterium acnes (strain DSM 16379 / KPA171202) (Propionibacterium acnes).